The primary structure comprises 625 residues: tRNA uridine 5-carboxymethylaminomethyl modification enzyme MnmG (625 aa).

Residues 9-14 (GGGHAG), Val121, and Ser177 each bind FAD. 271–285 (GPRYCPSIEDKVNRF) lines the NAD(+) pocket. Gln368 provides a ligand contact to FAD.

Belongs to the MnmG family. Homodimer. Heterotetramer of two MnmE and two MnmG subunits. It depends on FAD as a cofactor.

The protein localises to the cytoplasm. In terms of biological role, NAD-binding protein involved in the addition of a carboxymethylaminomethyl (cmnm) group at the wobble position (U34) of certain tRNAs, forming tRNA-cmnm(5)s(2)U34. In Aliarcobacter butzleri (strain RM4018) (Arcobacter butzleri), this protein is tRNA uridine 5-carboxymethylaminomethyl modification enzyme MnmG.